Here is a 1387-residue protein sequence, read N- to C-terminus: Kinesin-like protein KIF15 (1387 aa).

Residues Met1–Glu23 form a disordered region. Over residues Arg10 to Asn22 the composition is skewed to polar residues. Residues Ala26–Ile363 enclose the Kinesin motor domain. Gly109–Thr116 is an ATP binding site. Residues Val368–Met1132 adopt a coiled-coil conformation. Ser568 carries the phosphoserine modification. Residue Lys1009 is modified to N6-acetyllysine. Phosphoserine occurs at positions 1141 and 1169.

The protein belongs to the TRAFAC class myosin-kinesin ATPase superfamily. Kinesin family. KLP2 subfamily. As to quaternary structure, interacts with MKI67 and TPX2. As to expression, expressed in brain (neurons in the external germinal layer of the cerebellum and in ventricular zones) (at protein level). Expressed in spleen and testis.

It localises to the cytoplasm. The protein resides in the cytoskeleton. It is found in the spindle. In terms of biological role, plus-end directed kinesin-like motor enzyme involved in mitotic spindle assembly. The chain is Kinesin-like protein KIF15 (Kif15) from Mus musculus (Mouse).